A 348-amino-acid polypeptide reads, in one-letter code: NADH-ubiquinone oxidoreductase chain 2 (348 aa).

10 helical membrane passes run 1–21, 25–45, 60–80, 93–115, 149–169, 177–197, 200–220, 239–259, 274–294, and 326–346; these read MSPYVTMILISSLGLGTTITF, SWLMAWMGLEINTLAITPLMV, FLTQATASGLLLFATLNNAWM, LSAPMITMALALKMGVAPMHFWL, LNTTTMTILGLTSTIIGGLGG, KVLAYSSIAHLGWMVIIIQYS, LALLNLLLYITMTSTAFLTLM, IATMTAMLALLALGGLPPLTG, NLPALATLMALSALLSLFFYL, and LAMLSIMTLMALPTTPTMVAI.

It belongs to the complex I subunit 2 family.

The protein localises to the mitochondrion inner membrane. It carries out the reaction a ubiquinone + NADH + 5 H(+)(in) = a ubiquinol + NAD(+) + 4 H(+)(out). Core subunit of the mitochondrial membrane respiratory chain NADH dehydrogenase (Complex I) that is believed to belong to the minimal assembly required for catalysis. Complex I functions in the transfer of electrons from NADH to the respiratory chain. The immediate electron acceptor for the enzyme is believed to be ubiquinone. In Latimeria chalumnae (Coelacanth), this protein is NADH-ubiquinone oxidoreductase chain 2 (MT-ND2).